A 437-amino-acid chain; its full sequence is Zinc finger protein 491 (437 aa).

The C2H2-type 1; degenerate zinc-finger motif lies at 35 to 59 (KSCESGTCGEIFMGYSSFNRNIRTD). The C2H2-type 2; degenerate zinc-finger motif lies at 103–125 (FDCKECEKSFISPASIRRYMVTH). 11 C2H2-type zinc fingers span residues 131 to 153 (YKCK…ERTH), 159 to 181 (YECK…ERTH), 187 to 209 (YECK…ERTH), 215 to 237 (YKCK…ERTH), 243 to 265 (YECK…MRMH), 271 to 293 (HKCK…ERSH), 299 to 321 (YKCK…ERTH), 327 to 349 (DGCK…GRTH), 355 to 377 (YECK…ERTH), 383 to 405 (YECK…ERIH), and 411 to 433 (YQCK…ERTH).

This sequence belongs to the krueppel C2H2-type zinc-finger protein family.

Its subcellular location is the nucleus. Functionally, may be involved in transcriptional regulation. The chain is Zinc finger protein 491 (ZNF491) from Homo sapiens (Human).